Here is a 534-residue protein sequence, read N- to C-terminus: Prolyl 4-hydroxylase subunit alpha-1 (534 aa).

Residues M1–A17 form the signal peptide. N113 carries an N-linked (GlcNAc...) asparagine glycan. A TPR repeat occupies V205–H238. The N-linked (GlcNAc...) asparagine glycan is linked to N259. Residues T411–E519 enclose the Fe2OG dioxygenase domain. 3 residues coordinate Fe cation: H429, D431, and H500. A 2-oxoglutarate-binding site is contributed by K510.

This sequence belongs to the P4HA family. In terms of assembly, heterotetramer of two alpha-1 chains and two beta chains (P4HB)(the beta chain is the multi-functional PDI), where P4HB plays the role of a structural subunit; this tetramer catalyzes the formation of 4-hydroxyproline in collagen. It depends on Fe(2+) as a cofactor. Requires L-ascorbate as cofactor. Expressed in the heart, liver, skeletal muscle, kidney, placenta, lung and pancreas.

It localises to the endoplasmic reticulum lumen. It carries out the reaction L-prolyl-[collagen] + 2-oxoglutarate + O2 = trans-4-hydroxy-L-prolyl-[collagen] + succinate + CO2. With respect to regulation, inhibited by poly(L-proline). Catalyzes the post-translational formation of 4-hydroxyproline in -Xaa-Pro-Gly- sequences in collagens and other proteins. The protein is Prolyl 4-hydroxylase subunit alpha-1 (P4HA1) of Homo sapiens (Human).